We begin with the raw amino-acid sequence, 199 residues long: Dephospho-CoA kinase (199 aa).

Positions 3–199 constitute a DPCK domain; sequence TLGVTGGIGS…ELYWAVTGGQ (197 aa). 11–16 contacts ATP; the sequence is GSGKTT.

The protein belongs to the CoaE family.

It is found in the cytoplasm. The enzyme catalyses 3'-dephospho-CoA + ATP = ADP + CoA + H(+). It participates in cofactor biosynthesis; coenzyme A biosynthesis; CoA from (R)-pantothenate: step 5/5. Its function is as follows. Catalyzes the phosphorylation of the 3'-hydroxyl group of dephosphocoenzyme A to form coenzyme A. The chain is Dephospho-CoA kinase from Salinibacter ruber (strain DSM 13855 / M31).